A 459-amino-acid polypeptide reads, in one-letter code: uncharacterized protein (459 aa).

The protein belongs to the Rab GDI family.

The protein localises to the cytoplasm. Its subcellular location is the nucleus. This is an uncharacterized protein from Schizosaccharomyces pombe (strain 972 / ATCC 24843) (Fission yeast).